The following is a 37-amino-acid chain: Large ribosomal subunit protein bL36 (37 aa).

This sequence belongs to the bacterial ribosomal protein bL36 family.

This chain is Large ribosomal subunit protein bL36, found in Bifidobacterium adolescentis (strain ATCC 15703 / DSM 20083 / NCTC 11814 / E194a).